Reading from the N-terminus, the 712-residue chain is Phosphoribosylformylglycinamidine synthase subunit PurL (712 aa).

Residue His-32 is part of the active site. Position 35 (Tyr-35) interacts with ATP. Glu-76 contributes to the Mg(2+) binding site. Substrate contacts are provided by residues Ser-77–His-80 and Arg-99. The active-site Proton acceptor is His-78. Mg(2+) is bound at residue Asp-100. Gln-223 contacts substrate. A Mg(2+)-binding site is contributed by Asp-251. Position 295 to 297 (Glu-295 to Gln-297) interacts with substrate. Positions 470 and 507 each coordinate ATP. A Mg(2+)-binding site is contributed by Asn-508. Ser-510 is a binding site for substrate.

It belongs to the FGAMS family. In terms of assembly, monomer. Part of the FGAM synthase complex composed of 1 PurL, 1 PurQ and 2 PurS subunits.

The protein resides in the cytoplasm. The enzyme catalyses N(2)-formyl-N(1)-(5-phospho-beta-D-ribosyl)glycinamide + L-glutamine + ATP + H2O = 2-formamido-N(1)-(5-O-phospho-beta-D-ribosyl)acetamidine + L-glutamate + ADP + phosphate + H(+). The protein operates within purine metabolism; IMP biosynthesis via de novo pathway; 5-amino-1-(5-phospho-D-ribosyl)imidazole from N(2)-formyl-N(1)-(5-phospho-D-ribosyl)glycinamide: step 1/2. In terms of biological role, part of the phosphoribosylformylglycinamidine synthase complex involved in the purines biosynthetic pathway. Catalyzes the ATP-dependent conversion of formylglycinamide ribonucleotide (FGAR) and glutamine to yield formylglycinamidine ribonucleotide (FGAM) and glutamate. The FGAM synthase complex is composed of three subunits. PurQ produces an ammonia molecule by converting glutamine to glutamate. PurL transfers the ammonia molecule to FGAR to form FGAM in an ATP-dependent manner. PurS interacts with PurQ and PurL and is thought to assist in the transfer of the ammonia molecule from PurQ to PurL. This is Phosphoribosylformylglycinamidine synthase subunit PurL from Thermococcus gammatolerans (strain DSM 15229 / JCM 11827 / EJ3).